A 172-amino-acid polypeptide reads, in one-letter code: 3-hydroxydecanoyl-[acyl-carrier-protein] dehydratase (172 aa).

Residue His71 is part of the active site.

Belongs to the thioester dehydratase family. FabA subfamily. Homodimer.

Its subcellular location is the cytoplasm. It carries out the reaction a (3R)-hydroxyacyl-[ACP] = a (2E)-enoyl-[ACP] + H2O. The catalysed reaction is (3R)-hydroxydecanoyl-[ACP] = (2E)-decenoyl-[ACP] + H2O. It catalyses the reaction (2E)-decenoyl-[ACP] = (3Z)-decenoyl-[ACP]. The protein operates within lipid metabolism; fatty acid biosynthesis. Its function is as follows. Necessary for the introduction of cis unsaturation into fatty acids. Catalyzes the dehydration of (3R)-3-hydroxydecanoyl-ACP to E-(2)-decenoyl-ACP and then its isomerization to Z-(3)-decenoyl-ACP. Can catalyze the dehydratase reaction for beta-hydroxyacyl-ACPs with saturated chain lengths up to 16:0, being most active on intermediate chain length. This Sodalis glossinidius (strain morsitans) protein is 3-hydroxydecanoyl-[acyl-carrier-protein] dehydratase.